A 92-amino-acid polypeptide reads, in one-letter code: Large ribosomal subunit protein eL43 (92 aa).

Zn(2+) is bound by residues C39, C42, C57, and C60. The segment at 39-60 (CPNCGEDRVDRQGTGIWQCSYC) adopts a C4-type zinc-finger fold.

It belongs to the eukaryotic ribosomal protein eL43 family. Putative zinc-binding subfamily. Part of the 50S ribosomal subunit. Contacts protein L2. Requires Zn(2+) as cofactor.

Functionally, binds to the 23S rRNA. This is Large ribosomal subunit protein eL43 from Haloarcula marismortui (strain ATCC 43049 / DSM 3752 / JCM 8966 / VKM B-1809) (Halobacterium marismortui).